A 262-amino-acid polypeptide reads, in one-letter code: Glutamate racemase (262 aa).

Substrate contacts are provided by residues 9-10 (DS) and 41-42 (YG). Cysteine 73 functions as the Proton donor/acceptor in the catalytic mechanism. 74–75 (NT) contributes to the substrate binding site. Cysteine 180 serves as the catalytic Proton donor/acceptor. 181-182 (TH) is a binding site for substrate.

Belongs to the aspartate/glutamate racemases family.

It carries out the reaction L-glutamate = D-glutamate. It functions in the pathway cell wall biogenesis; peptidoglycan biosynthesis. Provides the (R)-glutamate required for cell wall biosynthesis. The chain is Glutamate racemase from Aliivibrio fischeri (strain ATCC 700601 / ES114) (Vibrio fischeri).